The sequence spans 444 residues: Exodeoxyribonuclease 7 large subunit (444 aa).

Belongs to the XseA family. Heterooligomer composed of large and small subunits.

The protein resides in the cytoplasm. The enzyme catalyses Exonucleolytic cleavage in either 5'- to 3'- or 3'- to 5'-direction to yield nucleoside 5'-phosphates.. Functionally, bidirectionally degrades single-stranded DNA into large acid-insoluble oligonucleotides, which are then degraded further into small acid-soluble oligonucleotides. The sequence is that of Exodeoxyribonuclease 7 large subunit from Rickettsia conorii (strain ATCC VR-613 / Malish 7).